The following is a 232-amino-acid chain: MKERRAPQPVVARCKLVLVGDVQCGKTAMLQVLAKDCYPETYVPTVFENYTACLETEEQRVELSLWDTSGSPYYDNVRPLCYSDSDAVLLCFDISRPETVDSALKKWRTEILDYCPSTRVLLIGCKTDLRTDLSTLMELSHQKQAPISYEQGCAIAKQLGAEIYLEGSAFTSEKSIHSIFRTASMLCLNKPSPLPQKSPVRSLSKRLLHLPSRSELISSTFKKEKAKSCSIM.

Residues 23–28 (QCGKTA), 38–45 (YPETYVPT), 67–71 (DTSGS), 125–128 (CKTD), and 169–170 (AF) each bind GTP. Positions 42-50 (YVPTVFENY) match the Effector region motif. A Cysteine methyl ester modification is found at Cys229. A lipid anchor (S-geranylgeranyl cysteine) is attached at Cys229. Residues 230 to 232 (SIM) constitute a propeptide, removed in mature form.

It belongs to the small GTPase superfamily. Rho family. Binds GRB7 and PLXNB1. Interacts with UBXD5. Interacts with PLXNA2. In terms of tissue distribution, mostly expressed in brain and liver.

The protein resides in the cell membrane. It localises to the cytoplasm. It is found in the cytoskeleton. Lacks intrinsic GTPase activity. Has a low affinity for GDP, and constitutively binds GTP. Controls rearrangements of the actin cytoskeleton. Induces the Rac-dependent neuritic process formation in part by disruption of the cortical actin filaments. Causes the formation of many neuritic processes from the cell body with disruption of the cortical actin filaments. The sequence is that of Rho-related GTP-binding protein Rho6 (RND1) from Homo sapiens (Human).